We begin with the raw amino-acid sequence, 213 residues long: Probable nicotinate-nucleotide adenylyltransferase (213 aa).

Belongs to the NadD family.

The enzyme catalyses nicotinate beta-D-ribonucleotide + ATP + H(+) = deamido-NAD(+) + diphosphate. It participates in cofactor biosynthesis; NAD(+) biosynthesis; deamido-NAD(+) from nicotinate D-ribonucleotide: step 1/1. Catalyzes the reversible adenylation of nicotinate mononucleotide (NaMN) to nicotinic acid adenine dinucleotide (NaAD). This is Probable nicotinate-nucleotide adenylyltransferase from Escherichia coli O139:H28 (strain E24377A / ETEC).